The primary structure comprises 127 residues: Large ribosomal subunit protein bL12 (127 aa).

Residues 98 to 127 (PKPVKNGVSKEEAEEAKKQLVESGAEVEIK) are disordered. The segment covering 105–117 (VSKEEAEEAKKQL) has biased composition (basic and acidic residues).

It belongs to the bacterial ribosomal protein bL12 family. Homodimer. Part of the ribosomal stalk of the 50S ribosomal subunit. Forms a multimeric L10(L12)X complex, where L10 forms an elongated spine to which 2 to 4 L12 dimers bind in a sequential fashion. Binds GTP-bound translation factors.

Forms part of the ribosomal stalk which helps the ribosome interact with GTP-bound translation factors. Is thus essential for accurate translation. This chain is Large ribosomal subunit protein bL12, found in Geobacter sulfurreducens (strain ATCC 51573 / DSM 12127 / PCA).